We begin with the raw amino-acid sequence, 252 residues long: Ribosome maturation factor RimP (252 aa).

The disordered stretch occupies residues 188-252 (QGAAPGTEGG…PAAGPGAQDE (65 aa)). Basic residues predominate over residues 208 to 224 (ARRPHQPKPKKAKKKGP).

Belongs to the RimP family.

Its subcellular location is the cytoplasm. Its function is as follows. Required for maturation of 30S ribosomal subunits. This chain is Ribosome maturation factor RimP, found in Rhodospirillum centenum (strain ATCC 51521 / SW).